We begin with the raw amino-acid sequence, 125 residues long: Large ribosomal subunit protein bL12 (125 aa).

This sequence belongs to the bacterial ribosomal protein bL12 family. In terms of assembly, homodimer. Part of the ribosomal stalk of the 50S ribosomal subunit. Forms a multimeric L10(L12)X complex, where L10 forms an elongated spine to which 2 to 4 L12 dimers bind in a sequential fashion. Binds GTP-bound translation factors.

Functionally, forms part of the ribosomal stalk which helps the ribosome interact with GTP-bound translation factors. Is thus essential for accurate translation. The protein is Large ribosomal subunit protein bL12 of Heliobacterium modesticaldum (strain ATCC 51547 / Ice1).